The sequence spans 299 residues: Putative glycylpeptide N-tetradecanoyltransferase (299 aa).

It belongs to the NMT family.

It carries out the reaction N-terminal glycyl-[protein] + tetradecanoyl-CoA = N-tetradecanoylglycyl-[protein] + CoA + H(+). Its function is as follows. Adds a myristoyl group to the N-terminal glycine residue of certain proteins. This is Putative glycylpeptide N-tetradecanoyltransferase from Amsacta moorei entomopoxvirus (AmEPV).